Reading from the N-terminus, the 331-residue chain is MTQNLGISVPMMSSSPLFANAPPEKKGVKNFAIDFLMGGVSAAVSKTAAAPIERVKLLIQNQDEMIKAGRLSEPYKGIGDCFGRTIKDEGFGSLWRGNTANVIRYFPTQALNFAFKDYFKRMFNFKKDKDGYWKWFGGNLASGGAAGASSLFFVYSLDYGRTRLANDAKASKGGGDRQFNGLVDVYRKTLKSDGIAGLYRGFNISCVGIIVYRGLYFGLYDSLKPVLLTGTLQVCSFASFALGWLITNGAGLASYPIDTVRRRMMMTSGEAVKYKSSLDAFQQIPAKEGAKSLFKGAGANILRAIAGAGVLSGYDQLQILFFGKKYGSGGA.

3 Solcar repeats span residues 29–122, 134–226, and 238–320; these read KNFA…FKRM, KWFG…LKPV, and ASFA…LQIL. Transmembrane regions (helical) follow at residues 31–58, 99–123, 132–152, 202–223, and 237–257; these read FAIDFLMGGVSAAVSKTAAAPIERVKLL, TANVIRYFPTQALNFAFKDYFKRMF, YWKWFGGNLASGGAAGASSLF, FNISCVGIIVYRGLYFGLYDSL, and FASFALGWLITNGAGLASYPI. Residues Arg-104 and Lys-116 each coordinate ADP. Arg-261 lines the ADP pocket. The interval 261–266 is important for transport activity; that stretch reads RRRMMM. The Nucleotide carrier signature motif signature appears at 261-266; sequence RRRMMM. Residues 297–317 form a helical membrane-spanning segment; the sequence is AGANILRAIAGAGVLSGYDQL.

Belongs to the mitochondrial carrier (TC 2.A.29) family. In terms of assembly, monomer.

Its subcellular location is the mitochondrion inner membrane. The enzyme catalyses ADP(in) + ATP(out) = ADP(out) + ATP(in). Its activity is regulated as follows. The matrix-open state (m-state) is inhibited by the membrane-permeable bongkrekic acid (BKA). The cytoplasmic-open state (c-state) is inhibited by the membrane-impermeable toxic inhibitor carboxyatractyloside (CATR). In terms of biological role, ADP:ATP antiporter that mediates import of ADP into the mitochondrial matrix for ATP synthesis, and export of ATP out to fuel the cell. Cycles between the cytoplasmic-open state (c-state) and the matrix-open state (m-state): operates by the alternating access mechanism with a single substrate-binding site intermittently exposed to either the cytosolic (c-state) or matrix (m-state) side of the inner mitochondrial membrane. In Triticum aestivum (Wheat), this protein is ADP,ATP carrier protein 2, mitochondrial (ANT-G2).